The sequence spans 959 residues: Isoleucine--tRNA ligase (959 aa).

The 'HIGH' region motif lies at 60–70; that stretch reads PYANGSLHIGH. Residue Glu-571 coordinates L-isoleucyl-5'-AMP. The 'KMSKS' region signature appears at 612–616; it reads KMSKS. Residue Lys-615 coordinates ATP. Residues Cys-928, Cys-931, Cys-948, and Cys-951 each coordinate Zn(2+).

It belongs to the class-I aminoacyl-tRNA synthetase family. IleS type 1 subfamily. Monomer. Zn(2+) serves as cofactor.

Its subcellular location is the cytoplasm. The enzyme catalyses tRNA(Ile) + L-isoleucine + ATP = L-isoleucyl-tRNA(Ile) + AMP + diphosphate. Catalyzes the attachment of isoleucine to tRNA(Ile). As IleRS can inadvertently accommodate and process structurally similar amino acids such as valine, to avoid such errors it has two additional distinct tRNA(Ile)-dependent editing activities. One activity is designated as 'pretransfer' editing and involves the hydrolysis of activated Val-AMP. The other activity is designated 'posttransfer' editing and involves deacylation of mischarged Val-tRNA(Ile). This is Isoleucine--tRNA ligase from Nostoc punctiforme (strain ATCC 29133 / PCC 73102).